The primary structure comprises 178 residues: MASISSTVATVSRAAPAQANMVAPFTGLKSNAAFPATKKANDFSTLPSNGGRVQCMKVWPPLGKKKYETLSYLPNLTEAQLAKEVDYLLRNKWVPCLEFELEHGFVYRENARSPGYYDGRYWTMWKLPMFGCTDSAQVMKELQECKKEYPQAWIRIIGFDNVRQVQCISFIASKPDGF.

Residues M1 to Q54 constitute a chloroplast transit peptide.

It belongs to the RuBisCO small chain family. Heterohexadecamer of 8 large and 8 small subunits.

It localises to the plastid. The protein localises to the chloroplast. RuBisCO catalyzes two reactions: the carboxylation of D-ribulose 1,5-bisphosphate, the primary event in carbon dioxide fixation, as well as the oxidative fragmentation of the pentose substrate. Both reactions occur simultaneously and in competition at the same active site. Although the small subunit is not catalytic it is essential for maximal activity. This Flaveria pringlei protein is Ribulose bisphosphate carboxylase small subunit, chloroplastic 4.